The sequence spans 521 residues: GMP synthase [glutamine-hydrolyzing] (521 aa).

The Glutamine amidotransferase type-1 domain occupies 10–204; sequence SLLILDFGSQ…ALGICGCEND (195 aa). Cys-87 serves as the catalytic Nucleophile. Residues His-178 and Glu-180 contribute to the active site. The region spanning 205 to 396 is the GMPS ATP-PPase domain; sequence WNMHNFAEEQ…LGMPREMLMR (192 aa). Residue 232-238 coordinates ATP; sequence SGGVDSS.

Homodimer.

The enzyme catalyses XMP + L-glutamine + ATP + H2O = GMP + L-glutamate + AMP + diphosphate + 2 H(+). It participates in purine metabolism; GMP biosynthesis; GMP from XMP (L-Gln route): step 1/1. In terms of biological role, catalyzes the synthesis of GMP from XMP. The chain is GMP synthase [glutamine-hydrolyzing] from Wolinella succinogenes (strain ATCC 29543 / DSM 1740 / CCUG 13145 / JCM 31913 / LMG 7466 / NCTC 11488 / FDC 602W) (Vibrio succinogenes).